A 175-amino-acid polypeptide reads, in one-letter code: Hypoxanthine-guanine phosphoribosyltransferase (175 aa).

Residues lysine 40 and glycine 41 each contribute to the diphosphate site. Positions 96 and 97 each coordinate Mg(2+). The active-site Proton acceptor is the aspartate 100. GMP-binding positions include lysine 128, 149 to 150 (FL), and aspartate 156. Arginine 162 lines the diphosphate pocket.

The protein belongs to the purine/pyrimidine phosphoribosyltransferase family. Mg(2+) is required as a cofactor.

It localises to the cytoplasm. The enzyme catalyses IMP + diphosphate = hypoxanthine + 5-phospho-alpha-D-ribose 1-diphosphate. It carries out the reaction GMP + diphosphate = guanine + 5-phospho-alpha-D-ribose 1-diphosphate. It participates in purine metabolism; IMP biosynthesis via salvage pathway; IMP from hypoxanthine: step 1/1. The protein operates within purine metabolism; GMP biosynthesis via salvage pathway; GMP from guanine: step 1/1. Purine salvage pathway enzyme that catalyzes the transfer of the ribosyl-5-phosphate group from 5-phospho-alpha-D-ribose 1-diphosphate (PRPP) to the N9 position of the 6-oxopurines hypoxanthine and guanine to form the corresponding ribonucleotides IMP (inosine 5'-monophosphate) and GMP (guanosine 5'-monophosphate), with the release of PPi. The polypeptide is Hypoxanthine-guanine phosphoribosyltransferase (hpt) (Mycoplasma pneumoniae (strain ATCC 29342 / M129 / Subtype 1) (Mycoplasmoides pneumoniae)).